The chain runs to 315 residues: MKKAVILFNLGGPDSLNAVRPFLFNLFYDRRIINLPNPFRFLLAKFISAKRENTARKIYEEIGGKSPILENTKMQANASELKLNENRNHVHKVFICMRYWRPFADEVIESVKQFDPDEVILLPLYPQYSTTTTLSSIENWQKNAKRYGLKCNTKMIHRYYDNQDFIEAHTNLIAKYYKLARKIGKPRVLFSAHSLPLSIIKKGDPYASQVERSVELIVEKLAINNLDWSICYQSKIGPVKWLEPSTESELLRAKADGVPVVLSPISFVSEHSETLVELDIEYKAIIKDGYYFRVPTLSTDPLFIKCLADLCINLP.

Residues histidine 193 and glutamate 273 each contribute to the Fe cation site.

The protein belongs to the ferrochelatase family.

The protein localises to the cytoplasm. It catalyses the reaction heme b + 2 H(+) = protoporphyrin IX + Fe(2+). It participates in porphyrin-containing compound metabolism; protoheme biosynthesis; protoheme from protoporphyrin-IX: step 1/1. Functionally, catalyzes the ferrous insertion into protoporphyrin IX. This chain is Ferrochelatase, found in Wolbachia pipientis wMel.